The following is a 902-amino-acid chain: Glutamate receptor 4 (902 aa).

The N-terminal stretch at 1-20 is a signal peptide; that stretch reads MRIICRQIVLLFSGFWGLAM. Over 22–544 the chain is Extracellular; it reads AFPSSVQIGG…GVFSFLDPLA (523 aa). N-linked (GlcNAc...) asparagine glycosylation is found at Asn-52, Asn-56, Asn-258, Asn-371, Asn-407, and Asn-414. Cysteines 84 and 331 form a disulfide. L-glutamate contacts are provided by Pro-500, Thr-502, and Arg-507. Residues 545-565 form a helical membrane-spanning segment; sequence YEIWMCIVFAYIGVSVVLFLV. Residues 566–592 lie on the Cytoplasmic side of the membrane; it reads SRFSPYEWHTEEPEDGKEGPSDQPPNE. The helical; Pore-forming intramembrane region spans 593–608; it reads FGIFNSLWFSLGAFMQ. The stretch at 609–611 is an intramembrane region; it reads QGC. Cys-611 carries S-palmitoyl cysteine lipidation. The Cytoplasmic portion of the chain corresponds to 612 to 617; the sequence is DISPRS. A helical transmembrane segment spans residues 618 to 638; it reads LSGRIVGGVWWFFTLIIISSY. Residues 639-813 are Extracellular-facing; that stretch reads TANLAAFLTV…DKTSALSLSN (175 aa). Positions 676, 677, and 727 each coordinate L-glutamate. Residues Cys-740 and Cys-795 are joined by a disulfide bond. A helical membrane pass occupies residues 814–834; the sequence is VAGVFYILVGGLGLAMLVALI. Topologically, residues 835–902 are cytoplasmic; sequence EFCYKSRAEA…GLAVIASDLP (68 aa). Residue Cys-837 is the site of S-palmitoyl cysteine attachment. Phosphoserine; by PKC/PRKCG is present on Ser-862.

It belongs to the glutamate-gated ion channel (TC 1.A.10.1) family. GRIA4 subfamily. As to quaternary structure, homotetramer or heterotetramer of pore-forming glutamate receptor subunits. Tetramers may be formed by the dimerization of dimers. Interacts with EPB41L1 via its C-terminus. Isoform 3 interacts with PICK1. Found in a complex with GRIA1, GRIA2, GRIA3, CNIH2, CNIH3, CACNG2, CACNG3, CACNG4, CACNG5, CACNG7 and CACNG8. Interacts with CACNG5 and PRKCG. Found in a complex with GRIA1, GRIA2, GRIA3, DLG4, CACNG8 and CNIH2. Post-translationally, palmitoylated. Depalmitoylated upon L-glutamate stimulation. ZDHHC3/GODZ specifically palmitoylates Cys-611, which leads to Golgi retention and decreased cell surface expression. In contrast, Cys-837 palmitoylation does not affect cell surface expression but regulates stimulation-dependent endocytosis. In terms of processing, phosphorylated at Ser-862 by PRKCG; phosphorylation increases plasma membrane-associated GRI4 expression. As to expression, detected in cerebellum.

It localises to the cell membrane. The protein localises to the postsynaptic cell membrane. It is found in the cell projection. The protein resides in the dendrite. The catalysed reaction is Ca(2+)(in) = Ca(2+)(out). The enzyme catalyses Na(+)(in) = Na(+)(out). It catalyses the reaction Mg(2+)(in) = Mg(2+)(out). Ionotropic glutamate receptor that functions as a ligand-gated cation channel, gated by L-glutamate and glutamatergic agonists such as alpha-amino-3-hydroxy-5-methyl-4-isoxazolepropionic acid (AMPA), quisqualic acid, and kainic acid. L-glutamate acts as an excitatory neurotransmitter at many synapses in the central nervous system and plays an important role in fast excitatory synaptic transmission. Binding of the excitatory neurotransmitter L-glutamate induces a conformation change, leading to the opening of the cation channel, and thereby converts the chemical signal to an electrical impulse upon entry of monovalent and divalent cations such as sodium and calcium. The receptor then desensitizes rapidly and enters a transient inactive state, characterized by the presence of bound agonist. In the presence of CACNG8, shows resensitization which is characterized by a delayed accumulation of current flux upon continued application of L-glutamate. This Rattus norvegicus (Rat) protein is Glutamate receptor 4.